We begin with the raw amino-acid sequence, 201 residues long: Ribonuclease HII (201 aa).

Positions 10-200 (LIEAGCDEAG…LGDGQLELFS (191 aa)) constitute an RNase H type-2 domain. Positions 16, 17, and 108 each coordinate a divalent metal cation.

The protein belongs to the RNase HII family. It depends on Mn(2+) as a cofactor. Mg(2+) serves as cofactor.

Its subcellular location is the cytoplasm. It catalyses the reaction Endonucleolytic cleavage to 5'-phosphomonoester.. Its function is as follows. Endonuclease that specifically degrades the RNA of RNA-DNA hybrids. The sequence is that of Ribonuclease HII from Bacteroides fragilis (strain YCH46).